Reading from the N-terminus, the 783-residue chain is Outer membrane usher protein FanD (783 aa).

The N-terminal stretch at 1–23 is a signal peptide; that stretch reads MNRKKHQILKILLLCLISSKSSA. The cysteines at positions 763 and 782 are disulfide-linked.

This sequence belongs to the fimbrial export usher family.

The protein localises to the cell outer membrane. Involved in the export and assembly of K99 fimbrial subunits across the outer membrane. This is Outer membrane usher protein FanD (fanD) from Escherichia coli.